A 315-amino-acid polypeptide reads, in one-letter code: Secreted frizzled-related protein 3 (315 aa).

Positions 1–21 are cleaved as a signal peptide; the sequence is MWRGLPALALAALLLLGRAPA. The 121-residue stretch at 22-142 folds into the FZ domain; the sequence is GRAAACEPVR…LYDRGVCISP (121 aa). Cystine bridges form between cysteine 27–cysteine 88, cysteine 35–cysteine 81, cysteine 72–cysteine 111, cysteine 100–cysteine 139, and cysteine 104–cysteine 128. The N-linked (GlcNAc...) asparagine glycan is linked to asparagine 41. An NTR domain is found at 170-290; that stretch reads CKCKPIKATQ…WDQKLRHLGK (121 aa). The interval 284 to 315 is disordered; sequence KLRHLGKGKGEPGQSDSALKTGKPGNARQTRS.

This sequence belongs to the secreted frizzled-related protein (sFRP) family.

The protein localises to the secreted. Its function is as follows. Soluble frizzled-related proteins (sFRPS) function as modulators of Wnt signaling through direct interaction with Wnts. They have a role in regulating cell growth and differentiation in specific cell types. SFRP3/FRZB appears to be involved in limb skeletogenesis. Antagonist of Wnt8 signaling. Regulates chondrocyte maturation and long bone development. This Gallus gallus (Chicken) protein is Secreted frizzled-related protein 3 (FRZB).